Consider the following 464-residue polypeptide: D-2-hydroxyglutarate dehydrogenase (464 aa).

Residues 37 to 216 (FAPAPSAIVF…VEATMRLERQ (180 aa)) enclose the FAD-binding PCMH-type domain. (R)-2-hydroxyglutarate contacts are provided by Arg325, Ser329, and Lys339. (R)-malate is bound by residues Arg325, Ser329, and Lys339. Zn(2+)-binding residues include His374 and His381. Position 383 (Asn383) interacts with (R)-2-hydroxyglutarate. Glu420 is a binding site for Zn(2+). His421 lines the (R)-2-hydroxyglutarate pocket. Residue His421 coordinates (R)-malate.

The protein belongs to the FAD-binding oxidoreductase/transferase type 4 family. As to quaternary structure, homodimer. Requires FAD as cofactor.

It carries out the reaction (R)-2-hydroxyglutarate + A = 2-oxoglutarate + AH2. The enzyme catalyses (R)-malate + A = oxaloacetate + AH2. Its activity is regulated as follows. Activated by Zn(2+) ions at low concentrations (10 uM) and inhibited by Zn(2+), Fe(2+) and Ni(2+) at high concentrations (10 mM). In terms of biological role, catalyzes the dehydrogenation of (R)-2-hydroxyglutarate (D-2-hydroxyglutarate or D-2-HG) to 2-oxoglutarate and of (R)-malate (D-malate) to oxaloacetate. Is functionally tied to L-serine biosynthesis, via its coupling with the D-3-phosphoglycerate dehydrogenase SerA, encoded by the adjacent gene in the locus. Is required for the utilization of D-2-hydroxyglutarate as well as D-malate as the sole carbon source for growth of P.stutzeri. Active in vitro with artificial electron acceptors such as 2,6-dichlorophenolindophenol (DCPIP) and appears to couple with electron transfer flavoprotein (ETF) for efficient oxidation of both D-2-hydroxyglutarate and D-malate in vivo. Cannot catalyze the oxidation of L-2-hydroxyglutarate, D-lactate, D-tartrate, D-2-hydroxybutanoate, D-mandelate, D-glycerate and D-phenyllactate. This chain is D-2-hydroxyglutarate dehydrogenase, found in Stutzerimonas stutzeri (strain A1501) (Pseudomonas stutzeri).